Here is a 147-residue protein sequence, read N- to C-terminus: D-aminoacyl-tRNA deacylase (147 aa).

A Gly-cisPro motif, important for rejection of L-amino acids motif is present at residues 136–137 (GP).

Belongs to the DTD family. As to quaternary structure, homodimer.

It is found in the cytoplasm. It carries out the reaction glycyl-tRNA(Ala) + H2O = tRNA(Ala) + glycine + H(+). It catalyses the reaction a D-aminoacyl-tRNA + H2O = a tRNA + a D-alpha-amino acid + H(+). In terms of biological role, an aminoacyl-tRNA editing enzyme that deacylates mischarged D-aminoacyl-tRNAs. Also deacylates mischarged glycyl-tRNA(Ala), protecting cells against glycine mischarging by AlaRS. Acts via tRNA-based rather than protein-based catalysis; rejects L-amino acids rather than detecting D-amino acids in the active site. By recycling D-aminoacyl-tRNA to D-amino acids and free tRNA molecules, this enzyme counteracts the toxicity associated with the formation of D-aminoacyl-tRNA entities in vivo and helps enforce protein L-homochirality. This is D-aminoacyl-tRNA deacylase from Streptococcus pyogenes serotype M6 (strain ATCC BAA-946 / MGAS10394).